The chain runs to 159 residues: Large ribosomal subunit protein uL22 (159 aa).

Residues 129-159 (VEGQQKAKMARQKAVTSVVKAPSKTQGGVQK) are disordered.

It belongs to the universal ribosomal protein uL22 family. As to quaternary structure, part of the 50S ribosomal subunit.

Functionally, this protein binds specifically to 23S rRNA; its binding is stimulated by other ribosomal proteins, e.g. L4, L17, and L20. It is important during the early stages of 50S assembly. It makes multiple contacts with different domains of the 23S rRNA in the assembled 50S subunit and ribosome. The globular domain of the protein is located near the polypeptide exit tunnel on the outside of the subunit, while an extended beta-hairpin is found that lines the wall of the exit tunnel in the center of the 70S ribosome. This is Large ribosomal subunit protein uL22 (rplV) from Mycoplasma pneumoniae (strain ATCC 29342 / M129 / Subtype 1) (Mycoplasmoides pneumoniae).